The following is a 213-amino-acid chain: Cytochrome c biogenesis ATP-binding export protein CcmA (213 aa).

Positions 11–213 constitute an ABC transporter domain; sequence LTARNLECIR…TVTVHHLVLS (203 aa). An ATP-binding site is contributed by 43–50; the sequence is GPNGSGKT.

The protein belongs to the ABC transporter superfamily. CcmA exporter (TC 3.A.1.107) family. The complex is composed of two ATP-binding proteins (CcmA) and two transmembrane proteins (CcmB).

The protein localises to the cell inner membrane. The catalysed reaction is heme b(in) + ATP + H2O = heme b(out) + ADP + phosphate + H(+). Functionally, part of the ABC transporter complex CcmAB involved in the biogenesis of c-type cytochromes; once thought to export heme, this seems not to be the case, but its exact role is uncertain. Responsible for energy coupling to the transport system. The protein is Cytochrome c biogenesis ATP-binding export protein CcmA of Nitrosomonas europaea (strain ATCC 19718 / CIP 103999 / KCTC 2705 / NBRC 14298).